Reading from the N-terminus, the 158-residue chain is Transcriptional repressor NrdR (158 aa).

A zinc finger spans residues 3-34; the sequence is CPYCGYPDSRVIDSRPTDDNTAIRRRRECLKC. The ATP-cone domain maps to 49–139; that stretch reads ILVIKKDNRR…VYRQFKDINT (91 aa).

It belongs to the NrdR family. Zn(2+) serves as cofactor.

Functionally, negatively regulates transcription of bacterial ribonucleotide reductase nrd genes and operons by binding to NrdR-boxes. The protein is Transcriptional repressor NrdR of Caldanaerobacter subterraneus subsp. tengcongensis (strain DSM 15242 / JCM 11007 / NBRC 100824 / MB4) (Thermoanaerobacter tengcongensis).